Here is a 339-residue protein sequence, read N- to C-terminus: MATTTMTMIQALRSAMDVMLERDDNVVVYGQDVGYFGGVFRCTEGLQTKYGKSRVFDAPISESGIVGTAVGMGAYGLRPVVEIQFADYFYPASDQIVSEMARLRYRSAGEFIAPLTLRMPCGGGIYGGQTHSQSPEAMFTQVCGLRTVMPSNPYDAKGLLIASIECDDPVIFLEPKRLYNGPFDGHHDRPVTPWSKHPHSAVPDGYYTVPLDKAAITRPGNDVSVLTYGTTVYVAQVAAEESGVDAEVIDLRSLWPLDLDTIVESVKKTGRCVVVHEATRTCGFGAELVSLVQEHCFHHLEAPIERVTGWDTPYPHAQEWAYFPGPSRVGAALKKVMEV.

As to quaternary structure, heterodimer of an alpha and a beta chain. It depends on thiamine diphosphate as a cofactor.

The enzyme catalyses N(6)-[(R)-lipoyl]-L-lysyl-[protein] + 3-methyl-2-oxobutanoate + H(+) = N(6)-[(R)-S(8)-2-methylpropanoyldihydrolipoyl]-L-lysyl-[protein] + CO2. The branched-chain alpha-keto dehydrogenase complex catalyzes the overall conversion of alpha-keto acids to acyl-CoA and CO(2). It contains multiple copies of three enzymatic components: branched-chain alpha-keto acid decarboxylase (E1), lipoamide acyltransferase (E2) and lipoamide dehydrogenase (E3). The chain is 2-oxoisovalerate dehydrogenase subunit beta (bkdA2) from Pseudomonas putida (Arthrobacter siderocapsulatus).